Consider the following 587-residue polypeptide: Tectonic-1 (587 aa).

Residues 1–22 (MRPRGLPPLLVVLLGCWASVSA) form the signal peptide. Asn-36 carries N-linked (GlcNAc...) asparagine glycosylation. The disordered stretch occupies residues 46–68 (GTFPSTRPPGTPRAPGPSSGPRP). The segment covering 51-68 (TRPPGTPRAPGPSSGPRP) has biased composition (pro residues). Asn-295 and Asn-528 each carry an N-linked (GlcNAc...) asparagine glycan.

Belongs to the tectonic family. Part of the tectonic-like complex (also named B9 complex).

The protein localises to the cytoplasm. It is found in the cytoskeleton. The protein resides in the cilium basal body. It localises to the secreted. Component of the tectonic-like complex, a complex localized at the transition zone of primary cilia and acting as a barrier that prevents diffusion of transmembrane proteins between the cilia and plasma membranes. Regulator of Hedgehog (Hh), required for both activation and inhibition of the Hh pathway in the patterning of the neural tube. During neural tube development, it is required for formation of the most ventral cell types and for full Hh pathway activation. Functions in Hh signal transduction to fully activate the pathway in the presence of high Hh levels and to repress the pathway in the absence of Hh signals. Modulates Hh signal transduction downstream of SMO and RAB23. The protein is Tectonic-1 (TCTN1) of Homo sapiens (Human).